The primary structure comprises 113 residues: UPF0251 protein TK0562 (113 aa).

Belongs to the UPF0251 family.

The polypeptide is UPF0251 protein TK0562 (Thermococcus kodakarensis (strain ATCC BAA-918 / JCM 12380 / KOD1) (Pyrococcus kodakaraensis (strain KOD1))).